A 114-amino-acid chain; its full sequence is Transmembrane protein 14C (114 aa).

4 consecutive transmembrane segments (helical) span residues 8-28 (LVPLHWLGFGYAALVASGGII), 33-53 (AGSVPSLAAGLLFGGLAGLGS), 62-82 (NIWLFLVTSGTLAGIMGMRFY), and 87-107 (FMPAGLIAGASLLMVVKLGIS).

The protein localises to the mitochondrion membrane. In terms of biological role, required for normal heme biosynthesis. This chain is Transmembrane protein 14C (TMEM14C), found in Bos taurus (Bovine).